Consider the following 555-residue polypeptide: 5'-nucleotidase-related protein (555 aa).

A signal peptide spans 1–25; it reads MKSLIGTLGLYCLFILTNNVVSSYG. The a divalent metal cation site is built by Asp-38, His-40, and Asp-91. N-linked (GlcNAc...) asparagine glycosylation occurs at Asn-105. An a divalent metal cation-binding site is contributed by Asn-123. N-linked (GlcNAc...) asparagine glycosylation occurs at Asn-198. A divalent metal cation-binding residues include His-225 and His-249. A glycan (N-linked (GlcNAc...) asparagine) is linked at Asn-295. Residues Arg-358, Arg-402, and Phe-421 each contribute to the AMP site. The N-linked (GlcNAc...) asparagine glycan is linked to Asn-465. Positions 505 and 511 each coordinate AMP.

Belongs to the 5'-nucleotidase family. Mg(2+) is required as a cofactor. Requires Mn(2+) as cofactor. In terms of tissue distribution, salivary gland (at protein level). Saliva (at protein level).

Its subcellular location is the secreted. It catalyses the reaction a ribonucleoside 5'-triphosphate + 2 H2O = a ribonucleoside 5'-phosphate + 2 phosphate + 2 H(+). DEPC (2 mM), sodium fluoride (10 mM) and 4,4'-Diisothiocyano-2,2'-stilbenedisulfonic acid (DIDS, 100 uM) nearly completely abrogate activity. Concanavalin A enhances activity. In terms of biological role, facilitates hematophagy by inhibiting ADP-dependent platelet aggregation and promoting disaggregation of ADP-stimulated platelets in the host. Cleaves adenosine triphosphate (ATP) and adenosine diphosphate (ADP) to adenosine monophosphate (AMP) and inorganic phosphate. Interacts with fibrinogen receptor integrin alpha-IIb/beta-3 (ITGA2B/ITGB3). This is 5'-nucleotidase-related protein from Glossina morsitans morsitans (Savannah tsetse fly).